The sequence spans 355 residues: Uroporphyrinogen decarboxylase (355 aa).

Substrate-binding positions include 36 to 40, aspartate 85, tyrosine 160, serine 215, and histidine 334; that span reads RQAGR.

The protein belongs to the uroporphyrinogen decarboxylase family. In terms of assembly, homodimer.

It is found in the cytoplasm. The enzyme catalyses uroporphyrinogen III + 4 H(+) = coproporphyrinogen III + 4 CO2. The protein operates within porphyrin-containing compound metabolism; protoporphyrin-IX biosynthesis; coproporphyrinogen-III from 5-aminolevulinate: step 4/4. In terms of biological role, catalyzes the decarboxylation of four acetate groups of uroporphyrinogen-III to yield coproporphyrinogen-III. The chain is Uroporphyrinogen decarboxylase from Rhodococcus erythropolis (strain PR4 / NBRC 100887).